The primary structure comprises 161 residues: Cyclic pyranopterin monophosphate synthase (161 aa).

Substrate is bound by residues 75–77 and 113–114; these read LCH and ME. The active site involves Asp-128.

Belongs to the MoaC family. In terms of assembly, homohexamer; trimer of dimers.

The catalysed reaction is (8S)-3',8-cyclo-7,8-dihydroguanosine 5'-triphosphate = cyclic pyranopterin phosphate + diphosphate. It participates in cofactor biosynthesis; molybdopterin biosynthesis. Catalyzes the conversion of (8S)-3',8-cyclo-7,8-dihydroguanosine 5'-triphosphate to cyclic pyranopterin monophosphate (cPMP). This chain is Cyclic pyranopterin monophosphate synthase, found in Cupriavidus pinatubonensis (strain JMP 134 / LMG 1197) (Cupriavidus necator (strain JMP 134)).